The following is a 413-amino-acid chain: MTAAGFNSILCLRQLVRLNRRQYSAPAKSVLSGSQTNDQATPPPTSKSADKMRGWQLHNYGDIDELQLSEMLKIPQIRCSNECLVRIRATAVNPIDLAMLRGYGATVLNKMRCQPGDGIEFPLILGREFCGELVQTGMGVSLPLGSRVWGVVPLQATIGSHAEYVAVPSYCLAPAPKELDDYEAASVLYAGLTAWSGLYITGGLGGPCGATTASGGGAHKRVLVLGGSGGVGTLAIQILKSQKVQVLATCSENAIEMVRNLGADLVVDYNNPQAMEELCKYAPYDIVLDCAGQGGQKAAESKYDFRQYITFSSPLLANIDKQGLGVGALKNVFDLFQTNVRSVTQRGGLVKWGFFSPAPQGIQFLQKLVEQRKLMPLIDSSYGFSELPKAFEKMKSGHLRGKIVVKLREETGD.

The transit peptide at 1–23 (MTAAGFNSILCLRQLVRLNRRQY) directs the protein to the mitochondrion. The segment at 27–52 (AKSVLSGSQTNDQATPPPTSKSADKM) is disordered. Over residues 31-40 (LSGSQTNDQA) the composition is skewed to polar residues. An Enoyl reductase (ER) domain is found at 61–405 (GDIDELQLSE…SGHLRGKIVV (345 aa)). Residues Ser-228, Gly-230, Val-231, Ser-251, Tyr-269, Gly-353, Phe-355, His-398, and Arg-400 each coordinate NADPH.

The protein belongs to the zinc-containing alcohol dehydrogenase family. Quinone oxidoreductase subfamily.

The protein resides in the mitochondrion matrix. It carries out the reaction a quinone + NADH + H(+) = a quinol + NAD(+). The catalysed reaction is a quinone + NADPH + H(+) = a quinol + NADP(+). It functions in the pathway cofactor biosynthesis; ubiquinone biosynthesis. In terms of biological role, NAD(P)H oxidoreductase. Involved in the ubiquinone biosynthetic pathway. This Drosophila melanogaster (Fruit fly) protein is NAD(P)H oxidoreductase RTN4IP1, mitochondrial.